The primary structure comprises 208 residues: Large ribosomal subunit protein uL4 (208 aa).

The segment at 58–77 (RGGGRKPWRQKGTGRARQGS) is disordered. Residues 60-71 (GGRKPWRQKGTG) show a composition bias toward basic residues.

It belongs to the universal ribosomal protein uL4 family. Part of the 50S ribosomal subunit.

Its function is as follows. One of the primary rRNA binding proteins, this protein initially binds near the 5'-end of the 23S rRNA. It is important during the early stages of 50S assembly. It makes multiple contacts with different domains of the 23S rRNA in the assembled 50S subunit and ribosome. Functionally, forms part of the polypeptide exit tunnel. This chain is Large ribosomal subunit protein uL4, found in Caldicellulosiruptor saccharolyticus (strain ATCC 43494 / DSM 8903 / Tp8T 6331).